Reading from the N-terminus, the 153-residue chain is D-aminoacyl-tRNA deacylase (153 aa).

A Gly-cisPro motif, important for rejection of L-amino acids motif is present at residues 137–138; that stretch reads GP.

This sequence belongs to the DTD family. As to quaternary structure, homodimer.

It localises to the cytoplasm. The enzyme catalyses glycyl-tRNA(Ala) + H2O = tRNA(Ala) + glycine + H(+). It catalyses the reaction a D-aminoacyl-tRNA + H2O = a tRNA + a D-alpha-amino acid + H(+). Its function is as follows. An aminoacyl-tRNA editing enzyme that deacylates mischarged D-aminoacyl-tRNAs. Also deacylates mischarged glycyl-tRNA(Ala), protecting cells against glycine mischarging by AlaRS. Acts via tRNA-based rather than protein-based catalysis; rejects L-amino acids rather than detecting D-amino acids in the active site. By recycling D-aminoacyl-tRNA to D-amino acids and free tRNA molecules, this enzyme counteracts the toxicity associated with the formation of D-aminoacyl-tRNA entities in vivo and helps enforce protein L-homochirality. The chain is D-aminoacyl-tRNA deacylase from Dehalococcoides mccartyi (strain ATCC BAA-2266 / KCTC 15142 / 195) (Dehalococcoides ethenogenes (strain 195)).